The chain runs to 316 residues: Pantothenate kinase (316 aa).

Position 95–102 (95–102 (GSVAVGKS)) interacts with ATP.

Belongs to the prokaryotic pantothenate kinase family.

It localises to the cytoplasm. The enzyme catalyses (R)-pantothenate + ATP = (R)-4'-phosphopantothenate + ADP + H(+). Its pathway is cofactor biosynthesis; coenzyme A biosynthesis; CoA from (R)-pantothenate: step 1/5. The sequence is that of Pantothenate kinase from Shigella sonnei (strain Ss046).